The sequence spans 121 residues: Small ribosomal subunit protein uS13 (121 aa).

Residues 98-121 (RGQKTRNNAHTVKGKPKSIAGKKK) form a disordered region. Over residues 109–121 (VKGKPKSIAGKKK) the composition is skewed to basic residues.

This sequence belongs to the universal ribosomal protein uS13 family. As to quaternary structure, part of the 30S ribosomal subunit. Forms a loose heterodimer with protein S19. Forms two bridges to the 50S subunit in the 70S ribosome.

Its function is as follows. Located at the top of the head of the 30S subunit, it contacts several helices of the 16S rRNA. In the 70S ribosome it contacts the 23S rRNA (bridge B1a) and protein L5 of the 50S subunit (bridge B1b), connecting the 2 subunits; these bridges are implicated in subunit movement. Contacts the tRNAs in the A and P-sites. The chain is Small ribosomal subunit protein uS13 from Phytoplasma australiense.